Reading from the N-terminus, the 504-residue chain is DnaJ homolog subfamily C member 3 (504 aa).

Residues Met-1–Cys-31 form the signal peptide. TPR repeat units follow at residues Val-37–Asn-70, Ile-72–Phe-104, Thr-105–Glu-138, Met-154–Asp-187, Ala-188–Asn-221, Thr-222–His-255, Leu-268–Val-301, Val-306–Asn-339, and Val-340–Asp-373. An intrachain disulfide couples Cys-248 to Cys-258. The residue at position 274 (Ser-274) is a Phosphoserine. Cysteines 313 and 329 form a disulfide. The segment at Gln-375–Arg-393 is flexible linker. Positions Asp-394–Glu-462 constitute a J domain. The interval Asp-451–Ser-481 is disordered. Ser-475 is modified (phosphoserine).

As to quaternary structure, interacts with EIF2AK2 and EIF2AK3. Forms a trimeric complex with DNAJB1 and HSPA8. Interacts with THAP12.

It localises to the endoplasmic reticulum. In terms of biological role, involved in the unfolded protein response (UPR) during ER stress. Co-chaperone of HSPA8/HSC70, it stimulates its ATPase activity. May inhibit both the autophosphorylation of EIF2AK2/PKR and the ability of EIF2AK2 to catalyze phosphorylation of the EIF2A. May inhibit EIF2AK3/PERK activity. In Rattus norvegicus (Rat), this protein is DnaJ homolog subfamily C member 3 (Dnajc3).